Consider the following 85-residue polypeptide: Polcalcin Aln g 4 (85 aa).

EF-hand domains follow at residues 7-42 and 45-77; these read QDQA…LGSV and DEVK…NRGL. Positions 20, 22, 24, 26, 31, 55, 57, 59, and 66 each coordinate Ca(2+).

This chain is Polcalcin Aln g 4, found in Alnus glutinosa (European alder).